A 297-amino-acid polypeptide reads, in one-letter code: SH2 domain-containing protein 6 (297 aa).

Disordered regions lie at residues methionine 1–arginine 61 and methionine 74–serine 93. Residues proline 36 to glutamine 45 show a composition bias toward pro residues. The SH2 domain occupies tryptophan 187 to threonine 295.

In Mus musculus (Mouse), this protein is SH2 domain-containing protein 6 (Sh2d6).